The chain runs to 1101 residues: Isoleucine--tRNA ligase (1101 aa).

Residues 50 to 60 carry the 'HIGH' region motif; the sequence is PFANGLPHYGH. The 'KMSKS' region motif lies at 629–633; the sequence is KLSKR. Lys-632 provides a ligand contact to ATP.

The protein belongs to the class-I aminoacyl-tRNA synthetase family. IleS type 2 subfamily. In terms of assembly, monomer. Zn(2+) is required as a cofactor.

It localises to the cytoplasm. It carries out the reaction tRNA(Ile) + L-isoleucine + ATP = L-isoleucyl-tRNA(Ile) + AMP + diphosphate. In terms of biological role, catalyzes the attachment of isoleucine to tRNA(Ile). As IleRS can inadvertently accommodate and process structurally similar amino acids such as valine, to avoid such errors it has two additional distinct tRNA(Ile)-dependent editing activities. One activity is designated as 'pretransfer' editing and involves the hydrolysis of activated Val-AMP. The other activity is designated 'posttransfer' editing and involves deacylation of mischarged Val-tRNA(Ile). The chain is Isoleucine--tRNA ligase from Anaplasma marginale (strain St. Maries).